A 486-amino-acid chain; its full sequence is Aromatic-L-amino-acid decarboxylase (486 aa).

M1 is modified (N-acetylmethionine). Repeat copies occupy residues 58 to 115 and 118 to 178. Positions 58–178 are 2 X approximate tandem repeats; sequence QDVEKIIMPG…AASPGLTQGA (121 aa). Residue T82 coordinates substrate. Positions 148 and 149 each coordinate pyridoxal 5'-phosphate. H192 serves as a coordination point for substrate. Residues T246 and N300 each coordinate pyridoxal 5'-phosphate. N6-(pyridoxal phosphate)lysine is present on K303.

The protein belongs to the group II decarboxylase family. Homodimer. Pyridoxal 5'-phosphate serves as cofactor.

The enzyme catalyses L-dopa + H(+) = dopamine + CO2. It catalyses the reaction 5-hydroxy-L-tryptophan + H(+) = serotonin + CO2. It participates in catecholamine biosynthesis; dopamine biosynthesis; dopamine from L-tyrosine: step 2/2. Functionally, catalyzes the decarboxylation of L-3,4-dihydroxyphenylalanine (DOPA) to dopamine and L-5-hydroxytryptophan to serotonin. This Sus scrofa (Pig) protein is Aromatic-L-amino-acid decarboxylase (DDC).